The sequence spans 144 residues: Kunitz-type elastase inhibitor BrEI (144 aa).

The N-linked (GlcNAc...) asparagine glycan is linked to Asn-38. A disulfide bond links Cys-41 and Cys-88.

Belongs to the leguminous Kunitz-type inhibitor family.

Functionally, inhibitor of porcine pancreatic elastase with a Ki of 27 nM. Does not inhibit human neutrophil elastase, bovine trypsin, human plasma kallikrein or porcine pancreatic kallikrein. The sequence is that of Kunitz-type elastase inhibitor BrEI from Bauhinia rufa (Orchid tree).